Consider the following 131-residue polypeptide: Small ribosomal subunit protein uS8 (131 aa).

The protein belongs to the universal ribosomal protein uS8 family. In terms of assembly, part of the 30S ribosomal subunit. Contacts proteins S5 and S12.

Functionally, one of the primary rRNA binding proteins, it binds directly to 16S rRNA central domain where it helps coordinate assembly of the platform of the 30S subunit. The chain is Small ribosomal subunit protein uS8 from Paraburkholderia xenovorans (strain LB400).